Consider the following 1137-residue polypeptide: Isoleucine--tRNA ligase (1137 aa).

A 'HIGH' region motif is present at residues Pro-50–His-60. A 'KMSKS' region motif is present at residues Lys-688–Arg-692. Lys-691 contributes to the ATP binding site.

It belongs to the class-I aminoacyl-tRNA synthetase family. IleS type 2 subfamily. Monomer. Zn(2+) is required as a cofactor.

The protein localises to the cytoplasm. The catalysed reaction is tRNA(Ile) + L-isoleucine + ATP = L-isoleucyl-tRNA(Ile) + AMP + diphosphate. Catalyzes the attachment of isoleucine to tRNA(Ile). As IleRS can inadvertently accommodate and process structurally similar amino acids such as valine, to avoid such errors it has two additional distinct tRNA(Ile)-dependent editing activities. One activity is designated as 'pretransfer' editing and involves the hydrolysis of activated Val-AMP. The other activity is designated 'posttransfer' editing and involves deacylation of mischarged Val-tRNA(Ile). This chain is Isoleucine--tRNA ligase, found in Porphyromonas gingivalis (strain ATCC BAA-308 / W83).